The chain runs to 362 residues: DNA replication and repair protein RecF (362 aa).

30 to 37 is a binding site for ATP; it reads GPNGSGKT.

The protein belongs to the RecF family.

The protein localises to the cytoplasm. The RecF protein is involved in DNA metabolism; it is required for DNA replication and normal SOS inducibility. RecF binds preferentially to single-stranded, linear DNA. It also seems to bind ATP. In Proteus mirabilis (strain HI4320), this protein is DNA replication and repair protein RecF.